We begin with the raw amino-acid sequence, 134 residues long: MSPLCLLLLALALVAVPGARGACPVPADLKKSDGTRTCARLYENSDPYYDNCCQGPELSVDPGTDLPYLPSDWSNSASSLVVAQRCELTVWSLPGKRGKTRKFSTGSYPRLEEYRKGIFGTWAKSISGLYCKCY.

Positions 1–21 (MSPLCLLLLALALVAVPGARG) are cleaved as a signal peptide.

Monomer and homooligomer; most probably hexameric. Interacts with GP2. According to PubMed:10753942 interaction with syntaxins shown in PubMed:9244306 is physiologically questionable. Contains intrachain disulfide bonds. In terms of tissue distribution, specifically expressed in pancreas and also detected in secretory granules of parotid gland (at protein level). Expressed in pancreas, spleen, small intestine, lung and neutrophilic granulocytes (at protein level). Expressed by epithelial cells in duodenum and colon.

It localises to the zymogen granule membrane. It is found in the zymogen granule lumen. Its function is as follows. Functions in exocytosis in pancreatic acinar cells regulating the fusion of zymogen granules with each other. May have a pore-forming activity on membranes and regulate exocytosis in other exocrine tissues. The protein is Syncollin (Sycn) of Rattus norvegicus (Rat).